Consider the following 215-residue polypeptide: MLQVYLVRHGETQWNAERRIQGQSDSPLTAKGEQQAMQVATRAKELGITHIISSDLGRTRRTVEIIAQACGCDIIFDSRLRELNMGVLEKSHIDSLTEEEENWRRQLVNGTVDGRIPEGESMQELSDRVNAALESCRDLPQGSRPLLVSHGIALGCLVSTILGLPAWAERRLRLRNCSISRVDYQESLWLSSGWVVETAGDISHLDAPALDELQR.

Substrate contacts are provided by residues 8-15 (RHGETQWN), 21-22 (QG), Arg-58, Arg-60, 82-85 (ELNM), 104-105 (RR), and 151-152 (GI). His-9 acts as the Tele-phosphohistidine intermediate in catalysis. The active-site Proton donor/acceptor is Glu-82.

The protein belongs to the phosphoglycerate mutase family. GpmB subfamily.

It carries out the reaction (2R)-2-phosphoglycerate = (2R)-3-phosphoglycerate. The protein operates within carbohydrate degradation; glycolysis; pyruvate from D-glyceraldehyde 3-phosphate: step 3/5. The chain is Probable phosphoglycerate mutase GpmB from Shigella dysenteriae serotype 1 (strain Sd197).